Reading from the N-terminus, the 365-residue chain is Pheromone M-factor receptor (365 aa).

7 helical membrane passes run 7 to 24, 31 to 54, 73 to 100, 116 to 133, 155 to 182, 204 to 226, and 265 to 283; these read FYQFYAYFALVLSIPILY, NIPCLLLLFWLTLTTLIYVVESAI, ITSRIVTCSSIGIPASAFTLVLYLDTVI, VCLSILLPLIIMAMMVPL, YTLLFFYIPPCLLSFGGLFFVSRIVVLY, FLRLLCLAAVFFLGYFPLTIFMV, and VPPTVLYLMSLFFSTSGGW.

Belongs to the G-protein coupled receptor 4 family.

The protein localises to the membrane. In terms of biological role, receptor for the peptide pheromone M-factor, a mating factor of S.pombe. Pheromone signaling is essential for initiation of meiosis in S.pombe; M-factor signaling alone may be sufficient. This Schizosaccharomyces pombe (strain 972 / ATCC 24843) (Fission yeast) protein is Pheromone M-factor receptor (map3).